The chain runs to 272 residues: Probable ribosomal RNA small subunit methyltransferase A (272 aa).

Positions 23, 25, 50, 71, 95, and 110 each coordinate S-adenosyl-L-methionine.

It belongs to the class I-like SAM-binding methyltransferase superfamily. rRNA adenine N(6)-methyltransferase family. RsmA subfamily.

The protein resides in the cytoplasm. In terms of biological role, specifically dimethylates two adjacent adenosines in the loop of a conserved hairpin near the 3'-end of 16S rRNA in the 30S particle. May play a critical role in biogenesis of 30S subunits. The chain is Probable ribosomal RNA small subunit methyltransferase A from Thermococcus onnurineus (strain NA1).